The sequence spans 365 residues: UDP-N-acetylglucosamine--N-acetylmuramyl-(pentapeptide) pyrophosphoryl-undecaprenol N-acetylglucosamine transferase (365 aa).

UDP-N-acetyl-alpha-D-glucosamine-binding positions include 11 to 13, asparagine 124, arginine 165, serine 192, isoleucine 246, and glutamine 291; that span reads TGG.

This sequence belongs to the glycosyltransferase 28 family. MurG subfamily.

The protein resides in the cell inner membrane. It catalyses the reaction di-trans,octa-cis-undecaprenyl diphospho-N-acetyl-alpha-D-muramoyl-L-alanyl-D-glutamyl-meso-2,6-diaminopimeloyl-D-alanyl-D-alanine + UDP-N-acetyl-alpha-D-glucosamine = di-trans,octa-cis-undecaprenyl diphospho-[N-acetyl-alpha-D-glucosaminyl-(1-&gt;4)]-N-acetyl-alpha-D-muramoyl-L-alanyl-D-glutamyl-meso-2,6-diaminopimeloyl-D-alanyl-D-alanine + UDP + H(+). The protein operates within cell wall biogenesis; peptidoglycan biosynthesis. Cell wall formation. Catalyzes the transfer of a GlcNAc subunit on undecaprenyl-pyrophosphoryl-MurNAc-pentapeptide (lipid intermediate I) to form undecaprenyl-pyrophosphoryl-MurNAc-(pentapeptide)GlcNAc (lipid intermediate II). The sequence is that of UDP-N-acetylglucosamine--N-acetylmuramyl-(pentapeptide) pyrophosphoryl-undecaprenol N-acetylglucosamine transferase from Nitratidesulfovibrio vulgaris (strain ATCC 29579 / DSM 644 / CCUG 34227 / NCIMB 8303 / VKM B-1760 / Hildenborough) (Desulfovibrio vulgaris).